Reading from the N-terminus, the 353-residue chain is Photosystem II D2 protein (353 aa).

Threonine 2 carries the N-acetylthreonine modification. Threonine 2 carries the post-translational modification Phosphothreonine. A helical transmembrane segment spans residues 41–61; sequence CAYFALGGWFTGTTFVTSWYT. Histidine 118 lines the chlorophyll a pocket. The chain crosses the membrane as a helical span at residues 125-141; it reads GFMLRQFELARSVQLRP. Pheophytin a contacts are provided by glutamine 130 and asparagine 143. The helical transmembrane segment at 153 to 166 threads the bilayer; it reads VFVSVFLIYPLGQS. Residue histidine 198 participates in chlorophyll a binding. A helical transmembrane segment spans residues 208-228; that stretch reads AALLCAIHGATVENTLFEDGD. A plastoquinone is bound by residues histidine 215 and phenylalanine 262. Histidine 215 provides a ligand contact to Fe cation. Histidine 269 lines the Fe cation pocket. A helical transmembrane segment spans residues 279-295; that stretch reads GLWMSALGVVGLALNLR.

Belongs to the reaction center PufL/M/PsbA/D family. In terms of assembly, PSII is composed of 1 copy each of membrane proteins PsbA, PsbB, PsbC, PsbD, PsbE, PsbF, PsbH, PsbI, PsbJ, PsbK, PsbL, PsbM, PsbT, PsbX, PsbY, PsbZ, Psb30/Ycf12, at least 3 peripheral proteins of the oxygen-evolving complex and a large number of cofactors. It forms dimeric complexes. It depends on The D1/D2 heterodimer binds P680, chlorophylls that are the primary electron donor of PSII, and subsequent electron acceptors. It shares a non-heme iron and each subunit binds pheophytin, quinone, additional chlorophylls, carotenoids and lipids. There is also a Cl(-1) ion associated with D1 and D2, which is required for oxygen evolution. The PSII complex binds additional chlorophylls, carotenoids and specific lipids. as a cofactor.

The protein localises to the plastid. The protein resides in the chloroplast thylakoid membrane. The catalysed reaction is 2 a plastoquinone + 4 hnu + 2 H2O = 2 a plastoquinol + O2. In terms of biological role, photosystem II (PSII) is a light-driven water:plastoquinone oxidoreductase that uses light energy to abstract electrons from H(2)O, generating O(2) and a proton gradient subsequently used for ATP formation. It consists of a core antenna complex that captures photons, and an electron transfer chain that converts photonic excitation into a charge separation. The D1/D2 (PsbA/PsbD) reaction center heterodimer binds P680, the primary electron donor of PSII as well as several subsequent electron acceptors. D2 is needed for assembly of a stable PSII complex. In Amborella trichopoda, this protein is Photosystem II D2 protein.